Reading from the N-terminus, the 826-residue chain is Zinc phosphodiesterase ELAC protein 2 (826 aa).

The transit peptide at 1-16 directs the protein to the mitochondrion; sequence MWALCSLLRSAAGRTM. Positions 15–24 are enriched in polar residues; that stretch reads TMSQGRTISQ. Disordered stretches follow at residues 15 to 51 and 189 to 231; these read TMSQ…PSGC and QRRG…VSQR. Residues 27–38 show a composition bias toward basic and acidic residues; that stretch reads ARRERPRKDPLR. Ser-199, Ser-208, Ser-212, Ser-229, Ser-618, and Ser-736 each carry phosphoserine. The segment covering 208-224 has biased composition (basic and acidic residues); it reads SPERSSDSESNENEPHL. Residues 798 to 826 form a disordered region; the sequence is ELAGGLEDGEPQQKRAHTEEPQAKKVRAQ. The segment covering 808–820 has biased composition (basic and acidic residues); the sequence is PQQKRAHTEEPQA.

The protein belongs to the RNase Z family. Homodimer. Interacts with PTCD1. The cofactor is Zn(2+).

It is found in the mitochondrion. The protein resides in the mitochondrion matrix. It localises to the mitochondrion nucleoid. The protein localises to the nucleus. It catalyses the reaction Endonucleolytic cleavage of RNA, removing extra 3' nucleotides from tRNA precursor, generating 3' termini of tRNAs. A 3'-hydroxy group is left at the tRNA terminus and a 5'-phosphoryl group is left at the trailer molecule.. In terms of biological role, zinc phosphodiesterase, which displays mitochondrial tRNA 3'-processing endonuclease activity. Involved in tRNA maturation, by removing a 3'-trailer from precursor tRNA. Associates with mitochondrial DNA complexes at the nucleoids to initiate RNA processing and ribosome assembly. This Gorilla gorilla gorilla (Western lowland gorilla) protein is Zinc phosphodiesterase ELAC protein 2 (ELAC2).